Consider the following 279-residue polypeptide: Large ribosomal subunit protein uL2 (279 aa).

2 disordered regions span residues 32 to 53 (SLLRPLPKHGGRNNAGRITTRH) and 225 to 279 (AMNP…KKRK). Basic and acidic residues predominate over residues 253–268 (KEGRTRHINKPSDKLI). Over residues 269–279 (VRRRNAGKKRK) the composition is skewed to basic residues.

It belongs to the universal ribosomal protein uL2 family. In terms of assembly, part of the 50S ribosomal subunit. Forms a bridge to the 30S subunit in the 70S ribosome.

In terms of biological role, one of the primary rRNA binding proteins. Required for association of the 30S and 50S subunits to form the 70S ribosome, for tRNA binding and peptide bond formation. It has been suggested to have peptidyltransferase activity; this is somewhat controversial. Makes several contacts with the 16S rRNA in the 70S ribosome. The chain is Large ribosomal subunit protein uL2 from Clavibacter michiganensis subsp. michiganensis (strain NCPPB 382).